The primary structure comprises 640 residues: Calpain-5 (640 aa).

Residues 26-343 (LFEDPLFPAT…FTDIIKCRLI (318 aa)) form the Calpain catalytic domain. Catalysis depends on residues Cys-81, His-252, and Asn-284. The domain III stretch occupies residues 344 to 496 (NTSYLSIHKT…VFTDVPSNCR (153 aa)). The C2 domain occupies 499-617 (RLDEPPRTCW…HTLHLQDRSS (119 aa)).

It belongs to the peptidase C2 family.

Functionally, calcium-regulated non-lysosomal thiol-protease. This chain is Calpain-5 (Capn5), found in Mus musculus (Mouse).